The primary structure comprises 272 residues: Orotidine 5'-phosphate decarboxylase (272 aa).

Lys93 serves as the catalytic Proton donor.

The protein belongs to the OMP decarboxylase family. Type 2 subfamily.

It catalyses the reaction orotidine 5'-phosphate + H(+) = UMP + CO2. Its pathway is pyrimidine metabolism; UMP biosynthesis via de novo pathway; UMP from orotate: step 2/2. The polypeptide is Orotidine 5'-phosphate decarboxylase (Roseiflexus sp. (strain RS-1)).